A 204-amino-acid polypeptide reads, in one-letter code: Leucyl/phenylalanyl-tRNA--protein transferase (204 aa).

Belongs to the L/F-transferase family.

The protein resides in the cytoplasm. It catalyses the reaction N-terminal L-lysyl-[protein] + L-leucyl-tRNA(Leu) = N-terminal L-leucyl-L-lysyl-[protein] + tRNA(Leu) + H(+). It carries out the reaction N-terminal L-arginyl-[protein] + L-leucyl-tRNA(Leu) = N-terminal L-leucyl-L-arginyl-[protein] + tRNA(Leu) + H(+). The catalysed reaction is L-phenylalanyl-tRNA(Phe) + an N-terminal L-alpha-aminoacyl-[protein] = an N-terminal L-phenylalanyl-L-alpha-aminoacyl-[protein] + tRNA(Phe). In terms of biological role, functions in the N-end rule pathway of protein degradation where it conjugates Leu, Phe and, less efficiently, Met from aminoacyl-tRNAs to the N-termini of proteins containing an N-terminal arginine or lysine. The protein is Leucyl/phenylalanyl-tRNA--protein transferase of Agrobacterium fabrum (strain C58 / ATCC 33970) (Agrobacterium tumefaciens (strain C58)).